Reading from the N-terminus, the 231-residue chain is Ion-translocating oxidoreductase complex subunit E (231 aa).

The next 6 helical transmembrane spans lie at 18-38, 39-59, 69-89, 93-113, 128-148, and 182-202; these read GLVQ…VTNA, LGLG…VSLV, IPVF…LINA, GLYL…VIIG, AFDG…LGAG, and PFLL…LIAG.

Belongs to the NqrDE/RnfAE family. The complex is composed of six subunits: RnfA, RnfB, RnfC, RnfD, RnfE and RnfG.

The protein localises to the cell inner membrane. Functionally, part of a membrane-bound complex that couples electron transfer with translocation of ions across the membrane. The protein is Ion-translocating oxidoreductase complex subunit E of Shewanella denitrificans (strain OS217 / ATCC BAA-1090 / DSM 15013).